The primary structure comprises 276 residues: Large ribosomal subunit protein uL2 (276 aa).

Residues 28 to 38 (RPEKSLTEKLS) show a composition bias toward basic and acidic residues. Disordered regions lie at residues 28-57 (RPEK…QGGG) and 219-276 (TVRG…RRKK).

Belongs to the universal ribosomal protein uL2 family. As to quaternary structure, part of the 50S ribosomal subunit. Forms a bridge to the 30S subunit in the 70S ribosome.

Functionally, one of the primary rRNA binding proteins. Required for association of the 30S and 50S subunits to form the 70S ribosome, for tRNA binding and peptide bond formation. It has been suggested to have peptidyltransferase activity; this is somewhat controversial. Makes several contacts with the 16S rRNA in the 70S ribosome. This Exiguobacterium sp. (strain ATCC BAA-1283 / AT1b) protein is Large ribosomal subunit protein uL2.